We begin with the raw amino-acid sequence, 5087 residues long: Nonribosomal peptide synthetase sidC (5087 aa).

The segment at 165–563 is adenylation 1; sequence HEMVRHTGNE…NGELQCMGRI (399 aa). The Carrier 1 domain maps to 671 to 744; the sequence is EPAGDIEQKI…KMAALVLKSQ (74 aa). Ser-705 carries the post-translational modification O-(pantetheine 4'-phosphoryl)serine. The interval 782 to 1112 is condensation 1; the sequence is DIIPCSPIQT…LFDTLFVWQD (331 aa). The interval 1217-1611 is adenylation 2; that stretch reads ELAKTDSERI…GRRDDLVKIR (395 aa). Positions 1740-1817 constitute a Carrier 2 domain; sequence ENLTDNEAKV…RLTRKISQSI (78 aa). An O-(pantetheine 4'-phosphoryl)serine modification is found at Ser-1777. The interval 1855 to 2272 is condensation 2; sequence KILPCTSLQE…RVMDFSLVES (418 aa). The Carrier 3 domain maps to 2302–2378; the sequence is EEWSAESLEI…EIASVLQGSK (77 aa). The residue at position 2339 (Ser-2339) is an O-(pantetheine 4'-phosphoryl)serine. The interval 2419–2831 is condensation 3; that stretch reads PCTTPQAGML…STSSSLDTAS (413 aa). An adenylation 3 region spans residues 2860–3258; sequence ATRHPSRVAL…GRIDDQVKLR (399 aa). The Carrier 4 domain occupies 3387 to 3464; that stretch reads TEDTDTIRKI…LLAKAVESPD (78 aa). Position 3424 is an O-(pantetheine 4'-phosphoryl)serine (Ser-3424). Residues 3506 to 3910 are condensation 4; it reads ITPCTSLQDG…RSLVEEPFSN (405 aa). The region spanning 3943–4019 is the Carrier 5 domain; it reads FQWSQAASLL…TMMAEVTVNG (77 aa). Residue Ser-3980 is modified to O-(pantetheine 4'-phosphoryl)serine. The segment at 4051–4416 is condensation 5; sequence EHIYPATPLQ…EYSICVELEA (366 aa). The Carrier 6 domain occupies 4496-4569; that stretch reads SLLEERIRDT…KMAEIVNSAR (74 aa). Residue Ser-4530 is modified to O-(pantetheine 4'-phosphoryl)serine. Positions 4610 to 4913 are condensation 6; it reads FLPATAGQVY…IQSDLHEIGS (304 aa). Residues 5013–5048 form a disordered region; sequence DVYKVSPPGSQLSQDSPEKQEANNKPSPQPSVDIEA.

It belongs to the NRP synthetase family.

It functions in the pathway siderophore biosynthesis. Functionally, nonribosomal peptide synthetase; part of the siderophore biosynthetic pathway. Arthroderma benhamiae produces 2 types of extracellular siderophores, ferrichrome C and ferricrocin. The biosynthesis of these siderophores depends on the hydroxylation of ornithine to N(5)-hydroxyornithine, catalyzed by the monooxygenase sidA. The structure of ferricrocin differs from ferrichrome C only by a serine for alanine substitution and the assembly of both siderophores is suggested to be performed by the nonribosomal peptide synthase (NRPS) sidC. This Arthroderma benhamiae (strain ATCC MYA-4681 / CBS 112371) (Trichophyton mentagrophytes) protein is Nonribosomal peptide synthetase sidC.